Here is a 371-residue protein sequence, read N- to C-terminus: MKKTLAALIVGAFAASAANAAVVYNNEGSKVELGGRLSVIAEQSNNTVDDQKQQHGALRNQGSRFHIKATHNFGDGFYAQGYLETRFISHYQDNADHFDDITTKYAYVTLGNKAFGEVKLGRAKTIADDITSAEDKEYGVLNNSKYIRTNGNTVGYTFKGIDGLVLGANYLLAQARDTANPGKKGEVAAQSISNGVQVGAKYDANNIVAGIAYGRTNYRKNIIAPKQNLGRKDQVEGVLSTLGYHFSDLGLLVSLDSGYAKTKYYEQQQQQRSSPTKPRYDEKRYFVSPGFQYELMEDTNVYGNFKYERTSSDEGKKTREQAVLFGVDHKLHKQVLTYIEGAYARTKTNGKGKAETTGKEKSVGVGLRVYF.

The first 20 residues, 1 to 20 (MKKTLAALIVGAFAASAANA), serve as a signal peptide directing secretion.

It belongs to the Gram-negative porin family. In terms of assembly, homotrimer.

It is found in the cell outer membrane. Functionally, forms pores that allow passive diffusion of small molecules across the outer membrane. This chain is Outer membrane protein P2 (ompP2), found in Haemophilus influenzae.